Reading from the N-terminus, the 440-residue chain is 3-phosphoshikimate 1-carboxyvinyltransferase (440 aa).

Lys-29 and Arg-34 together coordinate 3-phosphoshikimate. A phosphoenolpyruvate-binding site is contributed by Lys-29. 2 residues coordinate phosphoenolpyruvate: Gly-99 and Arg-128. 6 residues coordinate 3-phosphoshikimate: Ser-171, Ser-172, Gln-173, Ser-199, Asp-316, and Lys-343. Gln-173 contributes to the phosphoenolpyruvate binding site. Asp-316 acts as the Proton acceptor in catalysis. The phosphoenolpyruvate site is built by Arg-347, Arg-390, and Lys-416.

The protein belongs to the EPSP synthase family. In terms of assembly, monomer.

It localises to the cytoplasm. It catalyses the reaction 3-phosphoshikimate + phosphoenolpyruvate = 5-O-(1-carboxyvinyl)-3-phosphoshikimate + phosphate. It functions in the pathway metabolic intermediate biosynthesis; chorismate biosynthesis; chorismate from D-erythrose 4-phosphate and phosphoenolpyruvate: step 6/7. Its function is as follows. Catalyzes the transfer of the enolpyruvyl moiety of phosphoenolpyruvate (PEP) to the 5-hydroxyl of shikimate-3-phosphate (S3P) to produce enolpyruvyl shikimate-3-phosphate and inorganic phosphate. This chain is 3-phosphoshikimate 1-carboxyvinyltransferase, found in Deinococcus geothermalis (strain DSM 11300 / CIP 105573 / AG-3a).